The primary structure comprises 494 residues: Alpha-amylase 2 (494 aa).

The N-terminal stretch at 1 to 18 (MFLAKSIVCLALLAVANA) is a signal peptide. A disulfide bond links Cys-46 and Cys-102. Ca(2+) contacts are provided by Asn-116, Arg-165, and Asp-174. A disulfide bond links Cys-153 and Cys-167. Arg-202 contacts chloride. Asp-204 acts as the Nucleophile in catalysis. Ca(2+) is bound at residue His-208. Catalysis depends on Glu-241, which acts as the Proton donor. Chloride is bound by residues Asn-304 and Arg-343. A disordered region spans residues 350-370 (FTDTDQGPPTTDGQNIASPSF). Residues 351–363 (TDTDQGPPTTDGQ) show a composition bias toward low complexity. Intrachain disulfides connect Cys-376-Cys-382 and Cys-448-Cys-460.

The protein belongs to the glycosyl hydrolase 13 family. As to quaternary structure, monomer. Ca(2+) serves as cofactor. It depends on chloride as a cofactor.

It carries out the reaction Endohydrolysis of (1-&gt;4)-alpha-D-glucosidic linkages in polysaccharides containing three or more (1-&gt;4)-alpha-linked D-glucose units.. The polypeptide is Alpha-amylase 2 (Amy58) (Drosophila ananassae (Fruit fly)).